Here is an 83-residue protein sequence, read N- to C-terminus: MKASMFLALAGLALLFVVCYASESEEKEFPIELLSKIFAVDVFKGEERGCKGFGDSCTPGKNECCPNYACSSKHKWCKVYLGK.

Residues 1 to 21 form the signal peptide; that stretch reads MKASMFLALAGLALLFVVCYA. A propeptide spanning residues 22-48 is cleaved from the precursor; sequence SESEEKEFPIELLSKIFAVDVFKGEER. Disulfide bonds link C50–C65, C57–C70, and C64–C77. At L81 the chain carries Leucine amide.

Belongs to the neurotoxin 10 (Hwtx-1) family. 15 (Hntx-3) subfamily. Monomer. As to expression, expressed by the venom gland.

The protein resides in the secreted. Selective antagonist of neuronal tetrodotoxin (TTX)-sensitive voltage-gated sodium channels (IC(50)=1270 nM on Nav1.1/SCN1A, 270 nM on Nav1.2/SCN2A, 491 nM on Nav1.3/SCN3A and 232 nM on Nav1.7/SCN9A). This toxin suppress Nav1.7 current amplitude without significantly altering the activation, inactivation, and repriming kinetics. Short extreme depolarizations partially activate the toxin-bound channel, indicating voltage-dependent inhibition of this toxin. This toxin increases the deactivation of the Nav1.7 current after extreme depolarizations. The toxin-Nav1.7 complex is gradually dissociated upon prolonged strong depolarizations in a voltage-dependent manner, and the unbound toxin rebinds to Nav1.7 after a long repolarization. Moreover, analysis of chimeric channels showed that the DIIS3-S4 linker is critical for toxin binding to Nav1.7. These data are consistent with this toxin interacting with Nav1.7 site 4 and trapping the domain II voltage sensor in the closed state. The chain is Hainantoxin-III 9 from Cyriopagopus hainanus (Chinese bird spider).